The chain runs to 413 residues: Tubby-like F-box protein 6 (413 aa).

Positions 67-122 (SIWVDLPPELLLDIIQRIESEQSLWPGRRDVVACASVCKSWREMTKEVVKVPELSG) constitute an F-box domain.

The protein belongs to the TUB family. As to expression, ubiquitous, with higher levels in flowers.

This chain is Tubby-like F-box protein 6, found in Arabidopsis thaliana (Mouse-ear cress).